A 394-amino-acid polypeptide reads, in one-letter code: Flap endonuclease 1 (394 aa).

The tract at residues 1-104 (MGIKQLFSII…GELAKRFQRK (104 aa)) is N-domain. D34 is a Mg(2+) binding site. 2 residues coordinate DNA: R47 and R70. 5 residues coordinate Mg(2+): D86, E158, E160, D179, and D181. The interval 122 to 253 (DVEKFSRRTV…STALKLIREH (132 aa)) is I-domain. E158 contributes to the DNA binding site. 2 residues coordinate DNA: G231 and D233. D233 provides a ligand contact to Mg(2+). The tract at residues 341–349 (QQARIEGFF) is interaction with PCNA. Basic and acidic residues predominate over residues 356–383 (EEEKKAHKRKLEEQAEQKRKKVKEEKKE). The tract at residues 356-394 (EEEKKAHKRKLEEQAEQKRKKVKEEKKEKAKLKAKPRGA) is disordered. The span at 384–394 (KAKLKAKPRGA) shows a compositional bias: basic residues.

This sequence belongs to the XPG/RAD2 endonuclease family. FEN1 subfamily. In terms of assembly, interacts with PCNA. Three molecules of FEN1 bind to one PCNA trimer with each molecule binding to one PCNA monomer. PCNA stimulates the nuclease activity without altering cleavage specificity. Mg(2+) serves as cofactor. Post-translationally, phosphorylated. Phosphorylation upon DNA damage induces relocalization to the nuclear plasma.

It localises to the nucleus. The protein localises to the nucleolus. The protein resides in the nucleoplasm. It is found in the mitochondrion. Structure-specific nuclease with 5'-flap endonuclease and 5'-3' exonuclease activities involved in DNA replication and repair. During DNA replication, cleaves the 5'-overhanging flap structure that is generated by displacement synthesis when DNA polymerase encounters the 5'-end of a downstream Okazaki fragment. It enters the flap from the 5'-end and then tracks to cleave the flap base, leaving a nick for ligation. Also involved in the long patch base excision repair (LP-BER) pathway, by cleaving within the apurinic/apyrimidinic (AP) site-terminated flap. Acts as a genome stabilization factor that prevents flaps from equilibrating into structures that lead to duplications and deletions. Also possesses 5'-3' exonuclease activity on nicked or gapped double-stranded DNA, and exhibits RNase H activity. Also involved in replication and repair of rDNA and in repairing mitochondrial DNA. The chain is Flap endonuclease 1 from Sordaria macrospora (strain ATCC MYA-333 / DSM 997 / K(L3346) / K-hell).